Reading from the N-terminus, the 551-residue chain is CTP synthase (551 aa).

Positions 1–265 (MTRYLFITGG…DHIVAEKWGL (265 aa)) are amidoligase domain. Ser13 is a CTP binding site. Ser13 contacts UTP. ATP contacts are provided by residues 14–19 (SLGKGI) and Asp71. Asp71 and Glu139 together coordinate Mg(2+). Residues 146–148 (DIE), 186–191 (KTKPTQ), and Lys222 contribute to the CTP site. UTP contacts are provided by residues 186–191 (KTKPTQ) and Lys222. One can recognise a Glutamine amidotransferase type-1 domain in the interval 290–541 (TVAMVGKYVD…LRAAIAHRDG (252 aa)). L-glutamine is bound at residue Gly351. Residue Cys378 is the Nucleophile; for glutamine hydrolysis of the active site. Residues 379–382 (LGMQ), Glu402, and Arg469 contribute to the L-glutamine site. Residues His514 and Glu516 contribute to the active site.

It belongs to the CTP synthase family. In terms of assembly, homotetramer.

The catalysed reaction is UTP + L-glutamine + ATP + H2O = CTP + L-glutamate + ADP + phosphate + 2 H(+). It carries out the reaction L-glutamine + H2O = L-glutamate + NH4(+). It catalyses the reaction UTP + NH4(+) + ATP = CTP + ADP + phosphate + 2 H(+). It functions in the pathway pyrimidine metabolism; CTP biosynthesis via de novo pathway; CTP from UDP: step 2/2. Allosterically activated by GTP, when glutamine is the substrate; GTP has no effect on the reaction when ammonia is the substrate. The allosteric effector GTP functions by stabilizing the protein conformation that binds the tetrahedral intermediate(s) formed during glutamine hydrolysis. Inhibited by the product CTP, via allosteric rather than competitive inhibition. Catalyzes the ATP-dependent amination of UTP to CTP with either L-glutamine or ammonia as the source of nitrogen. Regulates intracellular CTP levels through interactions with the four ribonucleotide triphosphates. This chain is CTP synthase, found in Halorhodospira halophila (strain DSM 244 / SL1) (Ectothiorhodospira halophila (strain DSM 244 / SL1)).